Here is a 406-residue protein sequence, read N- to C-terminus: MSNTTVLLDKKTTEIIKATVPVLKEHGEAITKHFYKILLENNPELKNVFNQTNQRKGAQSKALANTVYAAAANIEKLEEILPHVKQIAHKHVSLNIKPEQYPIVGKYLLIAIKEVLGDAATDEIIEAWEKAYFVIADIFISVEKEMYNEKKNQIGGWTGFRDFKVIKKVKESKEITSFYLKPDDNLPITTFIPGQYITIKAQIESEAYVHLRQYSLSTAPGKDYYRISVKREASNQPIGVVSNYLHTSVEVGSVLPISAPAGDFILDERDHRPLVLISGGVGLTPIMSMLESVVEHQPNRNVVFIHAAKSIDHQAMRKRVSEIAKSKEQVKQYVVYSNPTNRTDGDKQGYIDYEWLKEVIPTKDAAFYLCGPKPFMSAINNDLQNMNIAQNDIHMELFGPLEPIAK.

Residues 6-144 (VLLDKKTTEI…IADIFISVEK (139 aa)) form the Globin domain. Position 91 (H91) interacts with heme b. Active-site charge relay system residues include Y101 and E143. Positions 155–406 (GGWTGFRDFK…LFGPLEPIAK (252 aa)) are reductase. The 110-residue stretch at 158-267 (TGFRDFKVIK…SAPAGDFILD (110 aa)) folds into the FAD-binding FR-type domain. Residues Y196 and 212 to 215 (RQYS) contribute to the FAD site. 280-285 (GVGLTP) lines the NADP(+) pocket. 397-400 (LFGP) provides a ligand contact to FAD.

The protein belongs to the globin family. Two-domain flavohemoproteins subfamily. It in the C-terminal section; belongs to the flavoprotein pyridine nucleotide cytochrome reductase family. Heme b is required as a cofactor. It depends on FAD as a cofactor.

It catalyses the reaction 2 nitric oxide + NADPH + 2 O2 = 2 nitrate + NADP(+) + H(+). The catalysed reaction is 2 nitric oxide + NADH + 2 O2 = 2 nitrate + NAD(+) + H(+). Is involved in NO detoxification in an aerobic process, termed nitric oxide dioxygenase (NOD) reaction that utilizes O(2) and NAD(P)H to convert NO to nitrate, which protects the bacterium from various noxious nitrogen compounds. Therefore, plays a central role in the inducible response to nitrosative stress. The sequence is that of Flavohemoprotein from Oceanobacillus iheyensis (strain DSM 14371 / CIP 107618 / JCM 11309 / KCTC 3954 / HTE831).